We begin with the raw amino-acid sequence, 153 residues long: Bacteriohemerythrin (153 aa).

Positions 21, 57, 61, 76, 80, 115, and 120 each coordinate Fe cation.

It belongs to the hemerythrin family. As to quaternary structure, monomer.

Oxygen-binding protein. May be involved in a storage mechanism or for delivery to oxygen-requiring enzymes. The oxygen-binding site contains two iron atoms. This Stenotrophomonas maltophilia (strain R551-3) protein is Bacteriohemerythrin.